A 190-amino-acid chain; its full sequence is Cytoplasmic envelopment protein 3 (190 aa).

A lipid anchor (N-myristoyl glycine; by host) is attached at Gly-2. Positions Gly-14–Phe-190 are disordered. Polar residues predominate over residues Ser-30 to Ser-43. The segment covering Asp-44–Glu-58 has biased composition (acidic residues). Positions Ser-80–Lys-90 are enriched in basic and acidic residues. Basic residues predominate over residues Lys-108–Gln-123. Over residues Glu-130–Thr-139 the composition is skewed to acidic residues.

Belongs to the herpesviridae cytoplasmic envelopment protein 3 family. As to quaternary structure, interacts with cytoplasmic envelopment protein 2; this interaction is essential for the proper localization of each protein to the assembly complex and thus for the production of infectious virus. Myristoylation and palmitoylation (probably on one or more of the nearby cysteines at the N-terminus) enable membrane-binding and Golgi apparatus-specific targeting and are essential for efficient packaging. In terms of processing, phosphorylated. Phosphorylation does not seem to be required for recycling to the host Golgi apparatus. Packaging is selective for underphosphorylated forms.

The protein resides in the virion tegument. It localises to the virion membrane. It is found in the host cell membrane. The protein localises to the host Golgi apparatus membrane. Plays an important role in the cytoplasmic envelopment of tegument proteins and capsids during the assembly and egress processes. Also participates in viral entry at the fusion step probably by regulating the core fusion machinery. This is Cytoplasmic envelopment protein 3 (UL99) from Human cytomegalovirus (strain Merlin) (HHV-5).